The chain runs to 103 residues: Large ribosomal subunit protein bL21 (103 aa).

Belongs to the bacterial ribosomal protein bL21 family. Part of the 50S ribosomal subunit. Contacts protein L20.

This protein binds to 23S rRNA in the presence of protein L20. This is Large ribosomal subunit protein bL21 from Actinobacillus pleuropneumoniae serotype 7 (strain AP76).